Here is a 1093-residue protein sequence, read N- to C-terminus: MSWFNASQLSSFAKQALSQAQKSIDRVLDIQEEEPSIWAETIPYGEPGISSPVSGGWDTSTWGLKSNTEPQSPPIASPKAITKPVRRTVVDESENFFSAFLSPTDVQTIQKSPVVSKPPAKSQRPEEEVKSSLHESLHIGQSRTPETTESQVKDSSLCVSGETLAAGTSSPKTEGKHEETVNKESDMKVPTVSLKVSESVIDVKTTMESISNTSTQSLTAETKDIALEPKEQKHEDRQSNTPSPPVSTFSSGTSTTSDIEVLDHESVISESSASSRQETTDSKSSLHLMQTSFQLLSASACPEYNRLDDFQKLTESCCSSDAFERIDSFSVQSLDSRSVSEINSDDELSGKGYALVPIIVNSSTPKSKTVESAEGKSEEVNETLVIPTEEAEMEESGRSATPVNCEQPDILVSSTPINEGQTVLDKVAEQCEPAESQPEALSEKEDVCKTVEFLNEKLEKREAQLLSLSKEKALLEEAFDNLKDEMFRVKEESSSISSLKDEFTQRIAEAEKKVQLACKERDAAKKEIKNIKEELATRLNSSETADLLKEKDEQIRGLMEEGEKLSKQQLHNSNIIKKLRAKDKENENMVAKLNKKVKELEEELQHLKQVLDGKEEVEKQHRENIKKLNSMVERQEKDLGRLQVDMDELEEKNRSIQAALDSAYKELTDLHKANAAKDSEAQEAALSREMKAKEELSAALEKAQEEARQQQETLAIQVGDLRLALQRTEQAAARKEDYLRHEIGELQQRLQEAENRNQELSQSVSSTTRPLLRQIENLQATLGSQTSSWEKLEKNLSDRLGESQTLLAAAVERERAATEELLANKIQMSSMESQNSLLRQENSRFQAQLESEKNRLCKLEDENNRYQVELENLKDEYVRTLEETRKEKTLLNSQLEMERMKVEQERKKAIFTQETIKEKERKPFSVSSTPTMSRSSSISGVDMAGLQTSFLSQDESHDHSFGPMPISANGSNLYDAVRMGAGSSIIENLQSQLKLREGEITHLQLEIGNLEKTRSIMAEELVKLTNQNDELEEKVKEIPKLRTQLRDLDQRYNTILQMYGEKAEEAEELRLDLEDVKNMYKTQIDELLRQSLS.

Disordered regions lie at residues 38 to 80 and 108 to 189; these read WAET…SPKA and TIQK…DMKV. A compositionally biased stretch (polar residues) spans 51 to 70; it reads SPVSGGWDTSTWGLKSNTEP. Residues S72, S77, S112, and S136 each carry the phosphoserine modification. Positions 123 to 137 are enriched in basic and acidic residues; sequence QRPEEEVKSSLHESL. Residues 139–158 are compositionally biased toward polar residues; the sequence is IGQSRTPETTESQVKDSSLC. The segment covering 173–187 has biased composition (basic and acidic residues); the sequence is TEGKHEETVNKESDM. Phosphoserine occurs at positions 199 and 217. Over residues 229-238 the composition is skewed to basic and acidic residues; that stretch reads PKEQKHEDRQ. Disordered regions lie at residues 229–260 and 266–285; these read PKEQKHEDRQSNTPSPPVSTFSSGTSTTSDIE and SVISESSASSRQETTDSKSS. Residues 246 to 257 are compositionally biased toward low complexity; sequence VSTFSSGTSTTS. Residues S328, S330, S333, S338, S344, S413, S542, S925, and S928 each carry the phosphoserine modification. An interaction with Elongin BC complex region spans residues 333 to 342; the sequence is SLDSRSVSEI. Residues 439–922 adopt a coiled-coil conformation; that stretch reads EALSEKEDVC…QETIKEKERK (484 aa). Residues 919-939 are disordered; sequence KERKPFSVSSTPTMSRSSSIS. Positions 925–939 are enriched in low complexity; it reads SVSSTPTMSRSSSIS. Position 929 is a phosphothreonine (T929). At S933 the chain carries Phosphoserine. The stretch at 984–1092 forms a coiled coil; it reads SIIENLQSQL…QIDELLRQSL (109 aa).

Interacts with TRNP1; may regulate TRNP1 proteasomal degradation. Component of the SNF/SWI transcription factor complexes. Interacts with RAB6A. Interacts with STAT3 and FER. Interacts with TCEB1. Post-translationally, phosphorylated by FER.

The protein localises to the cytoplasm. The protein resides in the nucleus. It is found in the golgi apparatus membrane. Potential coactivator of the androgen receptor. Mediates STAT3 degradation. May play critical roles in two RAB6-dependent retrograde transport processes: one from endosomes to the Golgi and the other from the Golgi to the ER. This protein binds the HIV-1 TATA element and inhibits transcriptional activation by the TATA-binding protein (TBP). The chain is TATA element modulatory factor (TMF1) from Homo sapiens (Human).